The following is a 286-amino-acid chain: Phosducin-like protein 2 (286 aa).

A phosphoserine mark is found at serine 35 and serine 62. The interval 96-286 is thioredoxin fold; that stretch reads FGEVFHINKP…INDDDDGFFD (191 aa).

This sequence belongs to the phosducin family. Interacts with the G protein beta-gamma subunit complex (STE4-STE18 complex). Interacts with CCT2; this interaction leads to inhibition of CCT complex mediated actin folding.

It localises to the cytoplasm. Functionally, essential for cell growth. Inhibits early G-protein signaling events following pheromone stimulation. Inhibits the folding activity of the chaperonin-containing T-complex (CCT) CCT2 which leads to inhibition of cytoskeletal actin folding. Plays a role in cell cycle progression in G1/S phase. The polypeptide is Phosducin-like protein 2 (Saccharomyces cerevisiae (strain ATCC 204508 / S288c) (Baker's yeast)).